We begin with the raw amino-acid sequence, 274 residues long: Large ribosomal subunit protein uL2cz (274 aa).

Disordered regions lie at residues 1–25 and 224–274; these read MAIHLYKTSTPSTRNGTVDSQVKSN and NPVD…RRSK. A compositionally biased stretch (polar residues) spans 7-25; the sequence is KTSTPSTRNGTVDSQVKSN.

This sequence belongs to the universal ribosomal protein uL2 family. Part of the 50S ribosomal subunit.

The protein resides in the plastid. It localises to the chloroplast. This is Large ribosomal subunit protein uL2cz (rpl2-A) from Coffea arabica (Arabian coffee).